Consider the following 219-residue polypeptide: LHFPL tetraspan subfamily member 5 protein (219 aa).

Topologically, residues 1–24 (MVKLLPAQEAAKIYHTNYVRNSRA) are cytoplasmic. Residues 25–45 (VGVMWGTLTICFSVLVMALFI) traverse the membrane as a helical segment. Topologically, residues 46-98 (QPYWIGDSVSTPQAGYFGLFSYCVGNVLSSELICKGGPLDFSSIPSRAFKTAM) are extracellular. A helical transmembrane segment spans residues 99–119 (FFVALAMFLIIGSIICFSLFF). Over 120 to 128 (VCNTATVYK) the chain is Cytoplasmic. Residues 129 to 149 (ICAWMQLAAATGLMIGCLVYP) form a helical membrane-spanning segment. Residues 150–178 (DGWDSSEVRRMCGEQTGKYTLGHCTIRWA) lie on the Extracellular side of the membrane. The helical transmembrane segment at 179–199 (FMLAILSIGDALILSFLAFVL) threads the bilayer. Residues 200-219 (GYRQDKLLPDDYKADGNEEV) lie on the Cytoplasmic side of the membrane.

It belongs to the LHFP family. In terms of assembly, forms the MET channel composed of TMC (TMC1 or TMC2), TMIE, TOMT, CIB (CIB2 or CIB3), LHPL5 and PCDH15. Interaction with PCDH15 is required for efficient localization to hair bundles.

It is found in the cell membrane. Functionally, auxiliary subunit of the mechanotransducer (MET) non-specific cation channel complex located at the tips of the shorter stereocilia of cochlear hair cells and that mediates sensory transduction in the auditory system. The MET complex is composed of two dimeric pore-forming ion-conducting transmembrane TMC (TMC1 or TMC2) subunits, and aided by several auxiliary proteins including LHFPL5, TMIE, CIB2/3 and TOMT, and the tip-link PCDH15. Functionally couples PCDH15 to the transduction channel. The chain is LHFPL tetraspan subfamily member 5 protein from Rattus norvegicus (Rat).